A 56-amino-acid chain; its full sequence is Alpha-conotoxin Pn1.2 (56 aa).

A signal peptide spans 1–16 (MFTVFLLVVLATTVVS). Positions 17–39 (FTSDRASDGGNAAMSDLIALTIK) are excised as a propeptide. Disulfide bonds link cysteine 41–cysteine 47 and cysteine 42–cysteine 55. The tract at residues 43–45 (SHP) is ser-Xaa-Pro motif, crucial for potent interaction with nAChR. Residue cysteine 55 is modified to Cysteine amide.

The protein belongs to the conotoxin A superfamily. In terms of processing, non-native isomers 'ribbon' (with disulfide connectivity C1-C4; C2-C3) and 'beads' (with disulfide connectivity C1-C2; C3-C4) also inhibit high voltage-activated (HVA) calcium channel currents in rat DRG neurons (20-30% inhibition at 1 uM toxin). Expressed by the venom duct.

The protein resides in the secreted. In terms of biological role, alpha-conotoxins act on postsynaptic membranes, they bind to the nicotinic acetylcholine receptors (nAChR) and thus inhibit them. This toxin inhibits human alpha-7/CHRNA7 and alpha-9-alpha-10/CHRNA9/CHRNA10 AChR (complete inhibition at 3 uM of toxin). In addition, this toxin inhibits high voltage-activated (HVA) calcium channel currents in rat DRG neurons (22% inhibition at 1 uM toxin) probably by activating GABA(B) receptors (GABBR1 and/or GABBR2). This is Alpha-conotoxin Pn1.2 from Conus pennaceus (Feathered cone).